Here is a 193-residue protein sequence, read N- to C-terminus: Peptidyl-tRNA hydrolase (193 aa).

Tyrosine 16 provides a ligand contact to tRNA. Catalysis depends on histidine 21, which acts as the Proton acceptor. TRNA contacts are provided by phenylalanine 67, asparagine 69, and asparagine 115.

Belongs to the PTH family. As to quaternary structure, monomer.

The protein localises to the cytoplasm. The enzyme catalyses an N-acyl-L-alpha-aminoacyl-tRNA + H2O = an N-acyl-L-amino acid + a tRNA + H(+). In terms of biological role, hydrolyzes ribosome-free peptidyl-tRNAs (with 1 or more amino acids incorporated), which drop off the ribosome during protein synthesis, or as a result of ribosome stalling. Catalyzes the release of premature peptidyl moieties from peptidyl-tRNA molecules trapped in stalled 50S ribosomal subunits, and thus maintains levels of free tRNAs and 50S ribosomes. The sequence is that of Peptidyl-tRNA hydrolase from Vesicomyosocius okutanii subsp. Calyptogena okutanii (strain HA).